The chain runs to 128 residues: Aspartate 1-decarboxylase (128 aa).

Residue S25 is the Schiff-base intermediate with substrate; via pyruvic acid of the active site. The residue at position 25 (S25) is a Pyruvic acid (Ser). Substrate is bound at residue T57. The active-site Proton donor is Y58. Position 73 to 75 (73 to 75 (GSA)) interacts with substrate.

Belongs to the PanD family. Heterooctamer of four alpha and four beta subunits. Requires pyruvate as cofactor. Post-translationally, is synthesized initially as an inactive proenzyme, which is activated by self-cleavage at a specific serine bond to produce a beta-subunit with a hydroxyl group at its C-terminus and an alpha-subunit with a pyruvoyl group at its N-terminus.

It localises to the cytoplasm. It carries out the reaction L-aspartate + H(+) = beta-alanine + CO2. The protein operates within cofactor biosynthesis; (R)-pantothenate biosynthesis; beta-alanine from L-aspartate: step 1/1. Its function is as follows. Catalyzes the pyruvoyl-dependent decarboxylation of aspartate to produce beta-alanine. This Burkholderia thailandensis (strain ATCC 700388 / DSM 13276 / CCUG 48851 / CIP 106301 / E264) protein is Aspartate 1-decarboxylase.